Here is a 37-residue protein sequence, read N- to C-terminus: Large ribosomal subunit protein bL36 (37 aa).

Belongs to the bacterial ribosomal protein bL36 family.

The polypeptide is Large ribosomal subunit protein bL36 (Aliarcobacter butzleri (strain RM4018) (Arcobacter butzleri)).